The following is a 196-amino-acid chain: Endoribonuclease YbeY (196 aa).

Zn(2+) is bound by residues His-120, His-124, and His-130.

The protein belongs to the endoribonuclease YbeY family. It depends on Zn(2+) as a cofactor.

It is found in the cytoplasm. Functionally, single strand-specific metallo-endoribonuclease involved in late-stage 70S ribosome quality control and in maturation of the 3' terminus of the 16S rRNA. The protein is Endoribonuclease YbeY of Corynebacterium glutamicum (strain ATCC 13032 / DSM 20300 / JCM 1318 / BCRC 11384 / CCUG 27702 / LMG 3730 / NBRC 12168 / NCIMB 10025 / NRRL B-2784 / 534).